The sequence spans 352 residues: Blue-sensitive opsin (352 aa).

Over 1–42 (MRGNRLVEFPDDFWIPIPLDTNNVTALSPFLVPQDHLGSPTI) the chain is Extracellular. An N-linked (GlcNAc...) asparagine glycan is attached at Asn23. Residues 43–67 (FYSMSALMFVLFVAGTAINLLTIAC) form a helical membrane-spanning segment. The Cytoplasmic segment spans residues 68-79 (TLQYKKLRSHLN). Residues 80–105 (YILVNMAVANLIVASTGSSTCFVCFA) form a helical membrane-spanning segment. Residues 106–119 (FKYMVLGPLGCKIE) lie on the Extracellular side of the membrane. A disulfide bridge links Cys116 with Cys193. The chain crosses the membrane as a helical span at residues 120–139 (GFTAALGGMVSLWSLAVIAF). The Cytoplasmic portion of the chain corresponds to 140 to 158 (ERWLVICKPLGNFVFKSEH). A helical transmembrane segment spans residues 159–182 (ALLCCALTWVCGLCASVPPLVGWS). Residues 183–208 (RYIPEGMQCSCGPDWYTTGNKFNNES) are Extracellular-facing. Asn206 carries N-linked (GlcNAc...) asparagine glycosylation. Residues 209 to 236 (FVMFLFCFCFAVPFSIIVFCYSQLLFTL) traverse the membrane as a helical segment. Residues 237-258 (KMAAKAQADSASTQKAEKEVTR) are Cytoplasmic-facing. Residues 259 to 282 (MVVVMVVAFLVCYVPYASFALWVI) form a helical membrane-spanning segment. Residues 283–290 (NNRGQTFD) are Extracellular-facing. Residues 291 to 315 (LRLATIPSCVSKASTVYNPVIYVLL) form a helical membrane-spanning segment. Lys302 bears the N6-(retinylidene)lysine mark. Residues 316–352 (NKQFRLCMKKMLGMSADEDEESSTSQSTTEVSKVGPS) are Cytoplasmic-facing. The segment at 332–352 (DEDEESSTSQSTTEVSKVGPS) is disordered.

Belongs to the G-protein coupled receptor 1 family. Opsin subfamily. Post-translationally, phosphorylated on some or all of the serine and threonine residues present in the C-terminal region. In terms of tissue distribution, the color pigments are found in the cone photoreceptor cells.

Its subcellular location is the membrane. Functionally, visual pigments are the light-absorbing molecules that mediate vision. They consist of an apoprotein, opsin, covalently linked to cis-retinal. This chain is Blue-sensitive opsin, found in Oryzias latipes (Japanese rice fish).